We begin with the raw amino-acid sequence, 85 residues long: MRKHSDCMNFCAVDATKGICRLSKQMINLDDAACPEIKVMPKCKNCKNFVEANDEGIGKCVGLEKEDWVYSTLNAITCEGHVFNE.

[4Fe-4S] cluster contacts are provided by His4, Cys7, Cys20, Cys34, Cys43, Cys46, Cys60, and Cys78.

The protein belongs to the HPA decarboxylase small subunit family. As to quaternary structure, heterooctamer consisting of 4 large (HpdB) subunits and 4 small (HpdC) subunits, arranged as a tetramer of heterodimers. Requires [4Fe-4S] cluster as cofactor.

The catalysed reaction is 4-hydroxyphenylacetate + H(+) = 4-methylphenol + CO2. The enzyme catalyses 3,4-dihydroxyphenylacetate + H(+) = 4-methylcatechol + CO2. Functionally, component of the HPA decarboxylase that decarboxylates phenylacetates with a hydroxyl group in the p-position. Active toward 4-hydroxyphenylacetate and 3,4-dihydroxyphenylacetate, forming 4-methylphenol and 4-methylcatechol, respectively. Is likely involved in the catabolism of aromatic amino acids such as tyrosine fermentation. 4-methylphenol (p-cresol) formation provides metabolic toxicity, which allows an active suppression of other microbes and may provide growth advantages for the producers in highly competitive environments. The small subunit is essential for enzymatic activity of HPA decarboxylase, and also seems to be involved in the regulation of the enzyme oligomeric state and catalytic activity. In Clostridioides difficile (strain 630) (Peptoclostridium difficile), this protein is 4-hydroxyphenylacetate decarboxylase small subunit.